Reading from the N-terminus, the 366-residue chain is Tetraacyldisaccharide 4'-kinase (366 aa).

62–69 (RVGGTGKT) is an ATP binding site.

It belongs to the LpxK family.

It catalyses the reaction a lipid A disaccharide + ATP = a lipid IVA + ADP + H(+). It functions in the pathway glycolipid biosynthesis; lipid IV(A) biosynthesis; lipid IV(A) from (3R)-3-hydroxytetradecanoyl-[acyl-carrier-protein] and UDP-N-acetyl-alpha-D-glucosamine: step 6/6. Transfers the gamma-phosphate of ATP to the 4'-position of a tetraacyldisaccharide 1-phosphate intermediate (termed DS-1-P) to form tetraacyldisaccharide 1,4'-bis-phosphate (lipid IVA). The polypeptide is Tetraacyldisaccharide 4'-kinase (Polynucleobacter necessarius subsp. necessarius (strain STIR1)).